The chain runs to 162 residues: Caveolin-2 (162 aa).

At 1–86 (MGLETEKADV…FEISKYIIYK (86 aa)) the chain is on the cytoplasmic side. Tyr19 carries the phosphotyrosine; by SRC modification. A phosphoserine mark is found at Ser20 and Ser23. Tyr27 is subject to Phosphotyrosine; by SRC. The segment at residues 87 to 107 (FLTVFLAIPLAFAAGILFATL) is an intramembrane region (helical). Over 108-162 (SCLHIWITMPFVKTCLMVLPSVQTIWKSVTDVAIAPLCTSVGRSFSSVSLQLSHD) the chain is Cytoplasmic.

Belongs to the caveolin family. Monomer or homodimer. Interacts with CAV1; the interaction forms a stable heterooligomeric complex that is required for targeting to lipid rafts and for caveolae formation. Tyrosine phosphorylated forms do not form heterooligomers with the Tyr-19-phosphorylated form existing as a monomer or dimer, and the Tyr-27-form as a monomer only. Interacts (tyrosine phosphorylated form) with the SH2 domain-containing proteins, RASA1, NCK1 and SRC. Interacts (tyrosine phosphorylated form) with INSR, the interaction (Tyr-27-phosphorylated form) is increased on insulin stimulation. Interacts (Tyr-19 phosphorylated form) with MAPK1 (phosphorylated form); the interaction, promoted by insulin, leads to nuclear location and MAPK1 activation. Interacts with STAT3; the interaction is increased on insulin-induced tyrosine phosphorylation leading to STAT activation. In terms of processing, phosphorylated on serine and tyrosine residues. CAV1 promotes phosphorylation on Ser-23 which then targets the complex to the plasma membrane, lipid rafts and caveolae. Phosphorylation on both Tyr-19 and Tyr-27 is required for insulin-induced 'Ser-727' phosphorylation of STAT3 and its activation. Phosphorylation on Tyr-19 is required for insulin-induced phosphorylation of MAPK1 and DNA binding of STAT3. Tyrosine phosphorylation is induced by both EGF and insulin.

Its subcellular location is the nucleus. It localises to the cytoplasm. It is found in the golgi apparatus membrane. The protein localises to the cell membrane. The protein resides in the membrane. Its subcellular location is the caveola. In terms of biological role, may act as a scaffolding protein within caveolar membranes. Interacts directly with G-protein alpha subunits and can functionally regulate their activity. Acts as an accessory protein in conjunction with CAV1 in targeting to lipid rafts and driving caveolae formation. Positive regulator of cellular mitogenesis of the MAPK signaling pathway. Required for the insulin-stimulated nuclear translocation and activation of MAPK1 and STAT3, and the subsequent regulation of cell cycle progression. The protein is Caveolin-2 (CAV2) of Dasypus novemcinctus (Nine-banded armadillo).